Reading from the N-terminus, the 251-residue chain is Triosephosphate isomerase (251 aa).

9 to 11 (NWK) is a substrate binding site. Histidine 95 serves as the catalytic Electrophile. Glutamate 167 functions as the Proton acceptor in the catalytic mechanism. Residues glycine 173, serine 212, and 233–234 (GG) contribute to the substrate site.

Belongs to the triosephosphate isomerase family. As to quaternary structure, homodimer.

The protein localises to the cytoplasm. It catalyses the reaction D-glyceraldehyde 3-phosphate = dihydroxyacetone phosphate. The protein operates within carbohydrate biosynthesis; gluconeogenesis. It functions in the pathway carbohydrate degradation; glycolysis; D-glyceraldehyde 3-phosphate from glycerone phosphate: step 1/1. Involved in the gluconeogenesis. Catalyzes stereospecifically the conversion of dihydroxyacetone phosphate (DHAP) to D-glyceraldehyde-3-phosphate (G3P). The chain is Triosephosphate isomerase from Pseudomonas entomophila (strain L48).